The chain runs to 409 residues: NADH-quinone oxidoreductase subunit D (409 aa).

It belongs to the complex I 49 kDa subunit family. NDH-1 is composed of 14 different subunits. Subunits NuoB, C, D, E, F, and G constitute the peripheral sector of the complex.

The protein localises to the cell inner membrane. It catalyses the reaction a quinone + NADH + 5 H(+)(in) = a quinol + NAD(+) + 4 H(+)(out). In terms of biological role, NDH-1 shuttles electrons from NADH, via FMN and iron-sulfur (Fe-S) centers, to quinones in the respiratory chain. The immediate electron acceptor for the enzyme in this species is believed to be ubiquinone. Couples the redox reaction to proton translocation (for every two electrons transferred, four hydrogen ions are translocated across the cytoplasmic membrane), and thus conserves the redox energy in a proton gradient. The sequence is that of NADH-quinone oxidoreductase subunit D from Helicobacter pylori (strain G27).